The following is a 442-amino-acid chain: Tubulin beta chain (442 aa).

Positions 11, 69, 138, 142, 143, 144, 204, and 226 each coordinate GTP. Residue glutamate 69 coordinates Mg(2+).

This sequence belongs to the tubulin family. Dimer of alpha and beta chains. A typical microtubule is a hollow water-filled tube with an outer diameter of 25 nm and an inner diameter of 15 nM. Alpha-beta heterodimers associate head-to-tail to form protofilaments running lengthwise along the microtubule wall with the beta-tubulin subunit facing the microtubule plus end conferring a structural polarity. Microtubules usually have 13 protofilaments but different protofilament numbers can be found in some organisms and specialized cells. The cofactor is Mg(2+).

Its subcellular location is the cytoplasm. The protein localises to the cytoskeleton. Functionally, tubulin is the major constituent of microtubules, a cylinder consisting of laterally associated linear protofilaments composed of alpha- and beta-tubulin heterodimers. Microtubules grow by the addition of GTP-tubulin dimers to the microtubule end, where a stabilizing cap forms. Below the cap, tubulin dimers are in GDP-bound state, owing to GTPase activity of alpha-tubulin. The polypeptide is Tubulin beta chain (Trypanosoma cruzi).